A 333-amino-acid polypeptide reads, in one-letter code: D-fructose 1,6-bisphosphatase class 2/sedoheptulose 1,7-bisphosphatase (333 aa).

Residues aspartate 33, glutamate 57, aspartate 85, and glutamate 88 each coordinate Mn(2+). Residues 88-90, tyrosine 119, 164-166, and 186-188 contribute to the substrate site; these read EGT, RAR, and DGD. Glutamate 213 is a Mn(2+) binding site.

This sequence belongs to the FBPase class 2 family. Homotetramer. Mn(2+) serves as cofactor.

It carries out the reaction beta-D-fructose 1,6-bisphosphate + H2O = beta-D-fructose 6-phosphate + phosphate. It catalyses the reaction D-sedoheptulose 1,7-bisphosphate + H2O = D-sedoheptulose 7-phosphate + phosphate. It functions in the pathway carbohydrate biosynthesis; Calvin cycle. In terms of biological role, catalyzes the hydrolysis of fructose 1,6-bisphosphate (Fru 1,6-P2) and sedoheptulose 1,7-bisphosphate (Sed 1,7-P2) to fructose 6-phosphate and sedoheptulose 7-phosphate, respectively. The polypeptide is D-fructose 1,6-bisphosphatase class 2/sedoheptulose 1,7-bisphosphatase (Prochlorococcus marinus (strain MIT 9515)).